The chain runs to 461 residues: mRNA cap guanine-N(7) methyltransferase (461 aa).

Residues 1–117 (MESSVKASVD…RKLQPQDALE (117 aa)) are disordered. Phosphoserine is present on residues Ser-11, Ser-15, Ser-16, and Ser-58. 2 stretches are compositionally biased toward polar residues: residues 14–29 (ESSPGVNETAAASGQR) and 49–58 (EQNSSYVQDS). The span at 65–93 (LDVEIILDEKHSEDDGGASKRSKLERGGG) shows a compositional bias: basic and acidic residues. Ser-94 and Ser-99 each carry phosphoserine. The short motif at 107–109 (KRK) is the Nuclear localization signal element. In terms of domain architecture, mRNA cap 0 methyltransferase spans 152–460 (SRIFYLRNFN…IYLVFAFEKQ (309 aa)). Residue 161 to 162 (NN) coordinates mRNA. S-adenosyl-L-methionine is bound by residues Lys-165, Gly-190, Asp-212, Asp-246, Gln-269, and Tyr-274.

The protein belongs to the class I-like SAM-binding methyltransferase superfamily. mRNA cap 0 methyltransferase family. Interacts with importin alpha, leading to stimulate both RNA-binding and methyltransferase activity. Interaction with importin alpha and beta is required for its nuclear localization, importin beta dissociating in response to RanGTP, allowing RNMT-importin alpha to bind RNA substrates. Interacts with elongating form of polymerase II and RNGTT. Interacts with RAMAC, this interaction significantly enhances RNA-binding and cap methyltransferase activity.

The protein resides in the nucleus. It catalyses the reaction a 5'-end (5'-triphosphoguanosine)-ribonucleoside in mRNA + S-adenosyl-L-methionine = a 5'-end (N(7)-methyl 5'-triphosphoguanosine)-ribonucleoside in mRNA + S-adenosyl-L-homocysteine. With respect to regulation, methyltransferase activity is activated by RAMAC. Functionally, catalytic subunit of the mRNA-capping methyltransferase RNMT:RAMAC complex that methylates the N7 position of the added guanosine to the 5'-cap structure of mRNAs. Binds RNA containing 5'-terminal GpppC. The protein is mRNA cap guanine-N(7) methyltransferase (Rnmt) of Rattus norvegicus (Rat).